A 259-amino-acid polypeptide reads, in one-letter code: Ribosomal RNA small subunit methyltransferase A (259 aa).

Positions 13, 15, 40, 61, 85, and 103 each coordinate S-adenosyl-L-methionine.

Belongs to the class I-like SAM-binding methyltransferase superfamily. rRNA adenine N(6)-methyltransferase family. RsmA subfamily.

The protein localises to the cytoplasm. It carries out the reaction adenosine(1518)/adenosine(1519) in 16S rRNA + 4 S-adenosyl-L-methionine = N(6)-dimethyladenosine(1518)/N(6)-dimethyladenosine(1519) in 16S rRNA + 4 S-adenosyl-L-homocysteine + 4 H(+). Its function is as follows. Specifically dimethylates two adjacent adenosines (A1518 and A1519) in the loop of a conserved hairpin near the 3'-end of 16S rRNA in the 30S particle. May play a critical role in biogenesis of 30S subunits. The protein is Ribosomal RNA small subunit methyltransferase A of Neisseria gonorrhoeae (strain ATCC 700825 / FA 1090).